The sequence spans 425 residues: Serine--tRNA ligase (425 aa).

Residue 235–237 (TAE) coordinates L-serine. Residue 266 to 268 (RSE) participates in ATP binding. E289 lines the L-serine pocket. Residue 353 to 356 (EISS) coordinates ATP. Position 389 (S389) interacts with L-serine.

It belongs to the class-II aminoacyl-tRNA synthetase family. Type-1 seryl-tRNA synthetase subfamily. As to quaternary structure, homodimer. The tRNA molecule binds across the dimer.

Its subcellular location is the cytoplasm. It carries out the reaction tRNA(Ser) + L-serine + ATP = L-seryl-tRNA(Ser) + AMP + diphosphate + H(+). The catalysed reaction is tRNA(Sec) + L-serine + ATP = L-seryl-tRNA(Sec) + AMP + diphosphate + H(+). It participates in aminoacyl-tRNA biosynthesis; selenocysteinyl-tRNA(Sec) biosynthesis; L-seryl-tRNA(Sec) from L-serine and tRNA(Sec): step 1/1. In terms of biological role, catalyzes the attachment of serine to tRNA(Ser). Is also able to aminoacylate tRNA(Sec) with serine, to form the misacylated tRNA L-seryl-tRNA(Sec), which will be further converted into selenocysteinyl-tRNA(Sec). This is Serine--tRNA ligase from Desulfotalea psychrophila (strain LSv54 / DSM 12343).